Here is a 178-residue protein sequence, read N- to C-terminus: Alkyl hydroperoxide reductase AhpD (178 aa).

The active-site Proton donor is the Cys-130. Cys-130 and Cys-133 are oxidised to a cystine. Residue Cys-133 is the Cysteine sulfenic acid (-SOH) intermediate of the active site.

It belongs to the AhpD family. As to quaternary structure, homotrimer.

The enzyme catalyses N(6)-[(R)-dihydrolipoyl]-L-lysyl-[lipoyl-carrier protein] + a hydroperoxide = N(6)-[(R)-lipoyl]-L-lysyl-[lipoyl-carrier protein] + an alcohol + H2O. Its function is as follows. Antioxidant protein with alkyl hydroperoxidase activity. Required for the reduction of the AhpC active site cysteine residues and for the regeneration of the AhpC enzyme activity. This Mycolicibacterium paratuberculosis (strain ATCC BAA-968 / K-10) (Mycobacterium paratuberculosis) protein is Alkyl hydroperoxide reductase AhpD.